We begin with the raw amino-acid sequence, 500 residues long: MSLASTQSIAEIRARNKELIQEVLKVYPEKTAKRRAKHLNVHQAGKSDCGVKSNIKSIPGVMTIRGCAYAGSKGVVWGPIKDMVHISHGPVGCGQYSWGSRRNYYVGTTGIDSFVTLQFTFDFREKDIVFGGDKKLVKILDEIQELFPLNNGITIQSECPIGLIGDDIEAVSRAKSKEYGGKTIVPVRCEGFRGVSQSLGHHIANDAVRDWIFDQVEADGKPKVEPTPYDVAIIGDYNIGGDAWSSRILLEEMGLRVIAQWSGDGSLAELEANVEGKLNILHCYRSMNYISRHMEEKFGIPWCEYNFFGPSKIAESLRRIAGYFDDKIKEGAERVIEKYQPLVNAVIAKYRPRLEGKTVMLYVGGLRSRHVIGAYEDLGMEVIGTGYEFGHNDDYQRTAQHYVKDGTLIHDDVNGYEFERFVEKLQPDLVGSGIKEKYVFQKMGGPFRQMHSWDYSGPYHGYDGFAIFARDMDMAINSPVWKKTKAPWKEASRAKLLAAE.

[8Fe-7S] cluster contacts are provided by C67, C93, and C159. Residues C283 and H451 each contribute to the [7Fe-Mo-9S-C-homocitryl] cluster site.

The protein belongs to the NifD/NifK/NifE/NifN family. Tetramer of two alpha and two beta chains. Forms complex with the iron protein (nitrogenase component 2). It depends on [8Fe-7S] cluster as a cofactor. [7Fe-Mo-9S-C-homocitryl] cluster is required as a cofactor.

The catalysed reaction is N2 + 8 reduced [2Fe-2S]-[ferredoxin] + 16 ATP + 16 H2O = H2 + 8 oxidized [2Fe-2S]-[ferredoxin] + 2 NH4(+) + 16 ADP + 16 phosphate + 6 H(+). Its function is as follows. This molybdenum-iron protein is part of the nitrogenase complex that catalyzes the key enzymatic reactions in nitrogen fixation. In Rhizobium sp. cowpea (strain IRc78), this protein is Nitrogenase molybdenum-iron protein alpha chain (nifD).